The sequence spans 343 residues: Putative mediator of RNA polymerase II transcription subunit 4 (343 aa).

Residues 86 to 125 are a coiled coil; that stretch reads LKKLEKHQKIQKEITEIQKEIEEKDKLISTLALNLKDIES. Residues 247 to 343 are disordered; it reads ISSPFSIGGN…DEESEEVEWD (97 aa). Residues 271–316 are compositionally biased toward low complexity; that stretch reads QQQQQQQQQPQQQLSQSQQSQQQTESELQPIQSILQPPQQLNIDLD. Acidic residues predominate over residues 317–343; it reads LNPDLDSSGDDDDEDDDDEESEEVEWD.

The protein belongs to the Mediator complex subunit 4 family. Component of the Mediator complex.

Its subcellular location is the nucleus. Its function is as follows. Component of the Mediator complex, a coactivator involved in the regulated transcription of nearly all RNA polymerase II-dependent genes. Mediator functions as a bridge to convey information from gene-specific regulatory proteins to the basal RNA polymerase II transcription machinery. Mediator is recruited to promoters by direct interactions with regulatory proteins and serves as a scaffold for the assembly of a functional preinitiation complex with RNA polymerase II and the general transcription factors. The polypeptide is Putative mediator of RNA polymerase II transcription subunit 4 (med4) (Dictyostelium discoideum (Social amoeba)).